The chain runs to 405 residues: Maintenance of mitochondrial morphology protein 1 (405 aa).

At 1 to 86 (MQVLNFYVNP…TGSTKSFTQG (86 aa)) the chain is on the lumenal side. A helical transmembrane segment spans residues 87 to 107 (LIIGQLSVIILLGIFIKFFVF). The Cytoplasmic segment spans residues 108-405 (ADSSTTSSTS…QPVSTTESDH (298 aa)). Positions 166-385 (APESLDWFNV…EPRFQVVKLP (220 aa)) constitute an SMP-LTD domain. The tract at residues 303-324 (SEPRVAMDSPQSTRDDNSEEPN) is disordered.

Belongs to the MMM1 family. Homodimer. Component of the ER-mitochondria encounter structure (ERMES) or MDM complex, composed of MMM1, MDM10, MDM12 and MDM34. An MMM1 homodimer associates with one molecule of MDM12 on each side in a pairwise head-to-tail manner, and the SMP-LTD domains of MMM1 and MDM12 generate a continuous hydrophobic tunnel for phospholipid trafficking.

Its subcellular location is the endoplasmic reticulum membrane. Functionally, component of the ERMES/MDM complex, which serves as a molecular tether to connect the endoplasmic reticulum (ER) and mitochondria. Components of this complex are involved in the control of mitochondrial shape and protein biogenesis, and function in nonvesicular lipid trafficking between the ER and mitochondria. The MDM12-MMM1 subcomplex functions in the major beta-barrel assembly pathway that is responsible for biogenesis of all outer membrane beta-barrel proteins, and acts in a late step after the SAM complex. The MDM10-MDM12-MMM1 subcomplex further acts in the TOM40-specific pathway after the action of the MDM12-MMM1 complex. Essential for establishing and maintaining the structure of mitochondria and maintenance of mtDNA nucleoids. In Meyerozyma guilliermondii (strain ATCC 6260 / CBS 566 / DSM 6381 / JCM 1539 / NBRC 10279 / NRRL Y-324) (Yeast), this protein is Maintenance of mitochondrial morphology protein 1.